A 429-amino-acid polypeptide reads, in one-letter code: Palmitoyltransferase ZDHHC23 (429 aa).

Residues 1 to 81 lie on the Cytoplasmic side of the membrane; that stretch reads MKPVKKKKTE…RIPWLRGAKK (81 aa). The chain crosses the membrane as a helical span at residues 82–102; the sequence is VNISILPPLVLLPVLLRVASW. A topological domain (lumenal) is located at residue H103. Residues 104 to 124 form a helical membrane-spanning segment; it reads FLLGVVVLTSLPMLALWYYYL. The Cytoplasmic portion of the chain corresponds to 125-130; it reads THRRKE. Residues 131-151 form a helical membrane-spanning segment; it reads QTLFFLSLGLFSLGYMYYVFL. Over 152 to 159 the chain is Lumenal; it reads QEVVPQGH. A helical transmembrane segment spans residues 160 to 180; the sequence is VGPAQLALLTCGLFLILVALY. The Cytoplasmic portion of the chain corresponds to 181–296; that stretch reads RAKKNPGYLS…NSCVGESNHQ (116 aa). The segment at 212–247 is disordered; sequence QEKTKGFPGTDTSGSLNNRTLKDDAKGSSRVGLDSP. The span at 221–230 shows a compositional bias: polar residues; the sequence is TDTSGSLNNR. The 51-residue stretch at 253–303 folds into the DHHC domain; sequence DWCAKCQLVRPARAWHCRICGICVRRMDHHCVWINSCVGESNHQAFILALS. The S-palmitoyl cysteine intermediate role is filled by C283. The chain crosses the membrane as a helical span at residues 297–317; the sequence is AFILALSIFLLTSVYGISLTL. Topologically, residues 318–347 are lumenal; the sequence is NTICRDRSLFTALFYCPGVYANYSSALSFT. The helical transmembrane segment at 348 to 368 threads the bilayer; sequence CVWYSVIITAGMAYIFLIQLI. Residues 369–429 are Cytoplasmic-facing; the sequence is NISYNVTERE…TVHTPAEDIV (61 aa). The segment at 426–429 is interaction with NOS1; it reads EDIV.

Belongs to the DHHC palmitoyltransferase family. Interacts with NOS1. In terms of tissue distribution, expressed in the brain (at protein level), with highest levels in olfactory bulb, piriform cortex and hippocampus.

The protein localises to the golgi apparatus membrane. Its subcellular location is the golgi apparatus. The protein resides in the trans-Golgi network membrane. It carries out the reaction L-cysteinyl-[protein] + hexadecanoyl-CoA = S-hexadecanoyl-L-cysteinyl-[protein] + CoA. Functionally, palmitoyltransferase that could catalyze the addition of palmitate onto various protein substrates and be involved in a variety of cellular processes. Palmitoyltransferase that mediates palmitoylation of KCNMA1, regulating localization of KCNMA1 to the plasma membrane. May be involved in NOS1 regulation and targeting to the synaptic membrane. This is Palmitoyltransferase ZDHHC23 from Rattus norvegicus (Rat).